The chain runs to 307 residues: Protoheme IX farnesyltransferase (307 aa).

9 consecutive transmembrane segments (helical) span residues 31 to 51 (VTQL…PGMV), 55 to 75 (VLIG…AINC), 103 to 123 (TLVF…VYAN), 125 to 145 (LTMW…TILL), 153 to 173 (IVIG…AVAG), 179 to 199 (AWFL…ALAL), 223 to 243 (LLHI…PFVY), 246 to 266 (SGYI…AYAW), and 285 to 305 (ILYL…KFVP).

This sequence belongs to the UbiA prenyltransferase family. Protoheme IX farnesyltransferase subfamily.

It is found in the cell inner membrane. The enzyme catalyses heme b + (2E,6E)-farnesyl diphosphate + H2O = Fe(II)-heme o + diphosphate. The protein operates within porphyrin-containing compound metabolism; heme O biosynthesis; heme O from protoheme: step 1/1. Converts heme B (protoheme IX) to heme O by substitution of the vinyl group on carbon 2 of heme B porphyrin ring with a hydroxyethyl farnesyl side group. This chain is Protoheme IX farnesyltransferase, found in Cupriavidus necator (strain ATCC 17699 / DSM 428 / KCTC 22496 / NCIMB 10442 / H16 / Stanier 337) (Ralstonia eutropha).